Reading from the N-terminus, the 330-residue chain is Apolipoprotein E (330 aa).

The signal sequence occupies residues 1 to 18 (MKVLWAALVVALLAGCWA). Residues 21–43 (EPESPLQGKPEPELEPELEPKRE) are disordered. 7 repeat units span residues 96 to 117 (TLME…EQLG), 118 to 139 (PMAS…ARLR), 140 to 161 (SDME…AMLG), 162 to 183 (QSTE…KRVL), 184 to 205 (RDAE…EGAE), 206 to 227 (RSVS…TRHA), and 247 to 268 (GRLE…EQME). Residues 96 to 268 (TLMEETMKEI…HLDEVREQME (173 aa)) form a 7 X 22 AA approximate tandem repeats region. M159 is subject to Methionine sulfoxide. S163 is subject to Phosphoserine. The segment at 174–184 (HMRKLRKRVLR) is LDL and other lipoprotein receptors binding. Residue 178–181 (LRKR) participates in heparin binding. The interval 226 to 303 (HANLATQPLR…SWFEPLVEDM (78 aa)) is lipid-binding and lipoprotein association. Position 242–249 (242–249 (GQQLRGRL)) interacts with heparin. The interval 279 to 330 (NQMRQQVEAFQARLKSWFEPLVEDMQRQWAGLVEKVQVAVGTSPTTPPLETK) is homooligomerization. Positions 291–303 (RLKSWFEPLVEDM) are specificity for association with VLDL.

Belongs to the apolipoprotein A1/A4/E family. Homotetramer. May interact with ABCA1; functionally associated with ABCA1 in the biogenesis of HDLs. May interact with APP/A4 amyloid-beta peptide; the interaction is extremely stable in vitro but its physiological significance is unclear. May interact with MAPT. May interact with MAP2. In the cerebrospinal fluid, interacts with secreted SORL1. Interacts with PMEL; this allows the loading of PMEL luminal fragment on ILVs to induce fibril nucleation. In terms of processing, APOE exists as multiple glycosylated and sialylated glycoforms within cells and in plasma. The extent of glycosylation and sialylation are tissue and context specific. Glycated in plasma VLDL. Post-translationally, phosphorylated by FAM20C in the extracellular medium.

The protein resides in the secreted. Its subcellular location is the extracellular space. It is found in the extracellular matrix. The protein localises to the extracellular vesicle. It localises to the endosome. The protein resides in the multivesicular body. Functionally, APOE is an apolipoprotein, a protein associating with lipid particles, that mainly functions in lipoprotein-mediated lipid transport between organs via the plasma and interstitial fluids. APOE is a core component of plasma lipoproteins and is involved in their production, conversion and clearance. Apolipoproteins are amphipathic molecules that interact both with lipids of the lipoprotein particle core and the aqueous environment of the plasma. As such, APOE associates with chylomicrons, chylomicron remnants, very low density lipoproteins (VLDL) and intermediate density lipoproteins (IDL) but shows a preferential binding to high-density lipoproteins (HDL). It also binds a wide range of cellular receptors including the LDL receptor/LDLR, the LDL receptor-related proteins LRP1, LRP2 and LRP8 and the very low-density lipoprotein receptor/VLDLR that mediate the cellular uptake of the APOE-containing lipoprotein particles. Finally, APOE also has a heparin-binding activity and binds heparan-sulfate proteoglycans on the surface of cells, a property that supports the capture and the receptor-mediated uptake of APOE-containing lipoproteins by cells. A main function of APOE is to mediate lipoprotein clearance through the uptake of chylomicrons, VLDLs, and HDLs by hepatocytes. APOE is also involved in the biosynthesis by the liver of VLDLs as well as their uptake by peripheral tissues ensuring the delivery of triglycerides and energy storage in muscle, heart and adipose tissues. By participating in the lipoprotein-mediated distribution of lipids among tissues, APOE plays a critical role in plasma and tissues lipid homeostasis. APOE is also involved in two steps of reverse cholesterol transport, the HDLs-mediated transport of cholesterol from peripheral tissues to the liver, and thereby plays an important role in cholesterol homeostasis. First, it is functionally associated with ABCA1 in the biogenesis of HDLs in tissues. Second, it is enriched in circulating HDLs and mediates their uptake by hepatocytes. APOE also plays an important role in lipid transport in the central nervous system, regulating neuron survival and sprouting. In Neomonachus schauinslandi (Hawaiian monk seal), this protein is Apolipoprotein E (APOE).